We begin with the raw amino-acid sequence, 160 residues long: Large ribosomal subunit protein uL22c (160 aa).

It belongs to the universal ribosomal protein uL22 family. As to quaternary structure, part of the 50S ribosomal subunit.

Its subcellular location is the plastid. The protein resides in the chloroplast. Functionally, this protein binds specifically to 23S rRNA. Its function is as follows. The globular domain of the protein is located near the polypeptide exit tunnel on the outside of the subunit, while an extended beta-hairpin is found that lines the wall of the exit tunnel in the center of the 70S ribosome. The polypeptide is Large ribosomal subunit protein uL22c (rpl22) (Lepidium virginicum (Virginia pepperweed)).